Reading from the N-terminus, the 110-residue chain is Large ribosomal subunit protein uL22 (110 aa).

This sequence belongs to the universal ribosomal protein uL22 family. In terms of assembly, part of the 50S ribosomal subunit.

Functionally, this protein binds specifically to 23S rRNA; its binding is stimulated by other ribosomal proteins, e.g. L4, L17, and L20. It is important during the early stages of 50S assembly. It makes multiple contacts with different domains of the 23S rRNA in the assembled 50S subunit and ribosome. Its function is as follows. The globular domain of the protein is located near the polypeptide exit tunnel on the outside of the subunit, while an extended beta-hairpin is found that lines the wall of the exit tunnel in the center of the 70S ribosome. The chain is Large ribosomal subunit protein uL22 from Marinobacter nauticus (strain ATCC 700491 / DSM 11845 / VT8) (Marinobacter aquaeolei).